A 625-amino-acid chain; its full sequence is MTNNMNNYPLLSLINSPEDLRLLNKDQLPQLCQELRAYLLESVSQTSGHLASGLGTVELTVALHYVYKTPFDQLIWDVGHQAYPHKILTGRREQMSTIRQKDGIHPFPWREESEFDVLSVGHSSTSISAGLGIAVAAERENAGRKTVCVIGDGAITAGMAFEALNHAGALHTDMLVILNDNEMSISENVGALNNHLARIFSGSLYSTLRDGSKKILDKVPPIKNFMKKTEEHMKGVMFSPESTLFEELGFNYIGPVDGHNIDELVAMLTNMRNLKGPQFLHIKTKKGKGYAPAEKDPIGFHGVPKFDPISGELPKNNSKPTYSKIFGDWLCEMAEKDAKIIGITPAMREGSGMVEFSQRFPKQYFDVAIAEQHTVTFATGLAIGGYKPVVAIYSTFLQRAYDQLIHDVAIQNLPVLFAIDRAGIVGADGATHQGAFDISFMRCIPNMIIMTPSDENECRQMLYTGYQCGKPAAVRYPRGNAVGVKLTPLEMLPIGKSRLIRKGQKIAILNFGTLLPSALELSEKLNATVVDMRFVKPIDIEMINVLAQTHDYLVTLEENAIQGGAGSAVAEVLNSSGKSTALLQLGLPDYFIPQATRQEALADLGLDTKGIEEKILNFIAKQGNL.

Residues histidine 80 and 121 to 123 (GHS) contribute to the thiamine diphosphate site. Aspartate 152 contacts Mg(2+). Thiamine diphosphate is bound by residues 153–154 (GA), asparagine 181, tyrosine 290, and glutamate 371. Asparagine 181 provides a ligand contact to Mg(2+).

Belongs to the transketolase family. DXPS subfamily. In terms of assembly, homodimer. Requires Mg(2+) as cofactor. It depends on thiamine diphosphate as a cofactor.

The enzyme catalyses D-glyceraldehyde 3-phosphate + pyruvate + H(+) = 1-deoxy-D-xylulose 5-phosphate + CO2. It functions in the pathway metabolic intermediate biosynthesis; 1-deoxy-D-xylulose 5-phosphate biosynthesis; 1-deoxy-D-xylulose 5-phosphate from D-glyceraldehyde 3-phosphate and pyruvate: step 1/1. Functionally, catalyzes the acyloin condensation reaction between C atoms 2 and 3 of pyruvate and glyceraldehyde 3-phosphate to yield 1-deoxy-D-xylulose-5-phosphate (DXP). The chain is 1-deoxy-D-xylulose-5-phosphate synthase from Haemophilus influenzae (strain 86-028NP).